Reading from the N-terminus, the 275-residue chain is Large ribosomal subunit protein uL2 (275 aa).

Positions 225 to 275 (MNPIDHPHGGGEGRTSGGRHPVTPWGKPTKGKKTRSNKKTDRLIMRRRQTQ) are disordered.

Belongs to the universal ribosomal protein uL2 family. As to quaternary structure, part of the 50S ribosomal subunit. Forms a bridge to the 30S subunit in the 70S ribosome.

Its function is as follows. One of the primary rRNA binding proteins. Required for association of the 30S and 50S subunits to form the 70S ribosome, for tRNA binding and peptide bond formation. It has been suggested to have peptidyltransferase activity; this is somewhat controversial. Makes several contacts with the 16S rRNA in the 70S ribosome. The sequence is that of Large ribosomal subunit protein uL2 from Paramagnetospirillum magneticum (strain ATCC 700264 / AMB-1) (Magnetospirillum magneticum).